A 328-amino-acid chain; its full sequence is Lateral signaling target 1 protein (328 aa).

Disordered regions lie at residues 56 to 78, 108 to 135, and 177 to 200; these read SSQD…GLRS, PTHY…SASS, and PVQP…RLNG. Residues 178-200 show a composition bias toward polar residues; the sequence is VQPSTSTSRNNVSQISGSSRLNG.

In terms of assembly, interacts with fbf-2; the interaction probably mediates the release of the C-terminal tail of fbf-2 from the RNA-binding domain, thereby altering its RNA-binding affinity.

In terms of biological role, plays a role in germline stem cell maintenance, perhaps acting in concert with mRNA-binding factor fbf-2. May regulate fbf-2 by modulating RNA-binding and perhaps by competition with the intramolecular interaction between the fbf-2 RNA-binding domain and C-terminal tail. The chain is Lateral signaling target 1 protein from Caenorhabditis elegans.